We begin with the raw amino-acid sequence, 472 residues long: 3-isopropylmalate dehydratase large subunit (472 aa).

[4Fe-4S] cluster contacts are provided by C347, C407, and C410.

This sequence belongs to the aconitase/IPM isomerase family. LeuC type 1 subfamily. As to quaternary structure, heterodimer of LeuC and LeuD. The cofactor is [4Fe-4S] cluster.

It catalyses the reaction (2R,3S)-3-isopropylmalate = (2S)-2-isopropylmalate. Its pathway is amino-acid biosynthesis; L-leucine biosynthesis; L-leucine from 3-methyl-2-oxobutanoate: step 2/4. Functionally, catalyzes the isomerization between 2-isopropylmalate and 3-isopropylmalate, via the formation of 2-isopropylmaleate. The protein is 3-isopropylmalate dehydratase large subunit of Parasynechococcus marenigrum (strain WH8102).